A 95-amino-acid chain; its full sequence is Large ribosomal subunit protein uL23 (95 aa).

It belongs to the universal ribosomal protein uL23 family. As to quaternary structure, part of the 50S ribosomal subunit. Contacts protein L29, and trigger factor when it is bound to the ribosome.

Its function is as follows. One of the early assembly proteins it binds 23S rRNA. One of the proteins that surrounds the polypeptide exit tunnel on the outside of the ribosome. Forms the main docking site for trigger factor binding to the ribosome. The protein is Large ribosomal subunit protein uL23 of Levilactobacillus brevis (strain ATCC 367 / BCRC 12310 / CIP 105137 / JCM 1170 / LMG 11437 / NCIMB 947 / NCTC 947) (Lactobacillus brevis).